The chain runs to 593 residues: NADH-quinone oxidoreductase subunit C/D 1 (593 aa).

The NADH dehydrogenase I subunit C stretch occupies residues 1 to 193 (MPWAKEGDLQ…DNLEGLMNYD (193 aa)). Positions 217 to 593 (AQIVLNWGPL…IDPVVGETDR (377 aa)) are NADH dehydrogenase I subunit D.

The protein in the N-terminal section; belongs to the complex I 30 kDa subunit family. In the C-terminal section; belongs to the complex I 49 kDa subunit family. In terms of assembly, NDH-1 is composed of 13 different subunits. Subunits NuoB, CD, E, F, and G constitute the peripheral sector of the complex.

It is found in the cell inner membrane. The enzyme catalyses a quinone + NADH + 5 H(+)(in) = a quinol + NAD(+) + 4 H(+)(out). In terms of biological role, NDH-1 shuttles electrons from NADH, via FMN and iron-sulfur (Fe-S) centers, to quinones in the respiratory chain. The immediate electron acceptor for the enzyme in this species is believed to be ubiquinone. Couples the redox reaction to proton translocation (for every two electrons transferred, four hydrogen ions are translocated across the cytoplasmic membrane), and thus conserves the redox energy in a proton gradient. The polypeptide is NADH-quinone oxidoreductase subunit C/D 1 (nuoC1) (Aquifex aeolicus (strain VF5)).